We begin with the raw amino-acid sequence, 203 residues long: Urease accessory protein UreG (203 aa).

14–21 (GPVGSGKT) is a binding site for GTP.

Belongs to the SIMIBI class G3E GTPase family. UreG subfamily. As to quaternary structure, homodimer. UreD, UreF and UreG form a complex that acts as a GTP-hydrolysis-dependent molecular chaperone, activating the urease apoprotein by helping to assemble the nickel containing metallocenter of UreC. The UreE protein probably delivers the nickel.

Its subcellular location is the cytoplasm. Its function is as follows. Facilitates the functional incorporation of the urease nickel metallocenter. This process requires GTP hydrolysis, probably effectuated by UreG. The protein is Urease accessory protein UreG of Rhizobium etli (strain ATCC 51251 / DSM 11541 / JCM 21823 / NBRC 15573 / CFN 42).